Reading from the N-terminus, the 953-residue chain is UPF0746 protein DDB_G0281301 (953 aa).

The span at 1–10 shows a compositional bias: basic and acidic residues; sequence MVNNKRKEIE. The disordered stretch occupies residues 1 to 23; that stretch reads MVNNKRKEIENQENDNNDDNDGL. The segment covering 11–21 has biased composition (acidic residues); the sequence is NQENDNNDDND. The 35-residue stretch at 35–69 folds into the SAP domain; it reads YDSIRSKELQTIAKSLGLPIIGKKQEIYKRIEGYF.

Belongs to the UPF0746 family.

This is UPF0746 protein DDB_G0281301 from Dictyostelium discoideum (Social amoeba).